The primary structure comprises 489 residues: Rhamnulokinase (489 aa).

13–17 (ASSGR) serves as a coordination point for ATP. A disulfide bridge links Cys-68 with Cys-222. Substrate-binding positions include Gly-83 and 236 to 238 (HDT). Asp-237 functions as the Proton acceptor in the catalytic mechanism. Residue Thr-259 participates in ATP binding. Substrate is bound at residue Asn-296. Gln-304 lines the ATP pocket. Cys-353 and Cys-370 form a disulfide bridge. ATP is bound at residue Gly-402. Cys-413 and Cys-417 are joined by a disulfide.

Belongs to the rhamnulokinase family. In terms of assembly, monomer. It depends on Mg(2+) as a cofactor.

The catalysed reaction is L-rhamnulose + ATP = L-rhamnulose 1-phosphate + ADP + H(+). Its pathway is carbohydrate degradation; L-rhamnose degradation; glycerone phosphate from L-rhamnose: step 2/3. Involved in the catabolism of L-rhamnose (6-deoxy-L-mannose). Catalyzes the transfer of the gamma-phosphate group from ATP to the 1-hydroxyl group of L-rhamnulose to yield L-rhamnulose 1-phosphate. In Escherichia fergusonii (strain ATCC 35469 / DSM 13698 / CCUG 18766 / IAM 14443 / JCM 21226 / LMG 7866 / NBRC 102419 / NCTC 12128 / CDC 0568-73), this protein is Rhamnulokinase.